The primary structure comprises 154 residues: Myoglobin (154 aa).

The region spanning glycine 2–lysine 148 is the Globin domain. Residue histidine 65 participates in nitrite binding. Histidine 65 lines the O2 pocket. Histidine 94 is a heme b binding site.

In terms of assembly, monomeric.

Its subcellular location is the cytoplasm. The protein localises to the sarcoplasm. The enzyme catalyses Fe(III)-heme b-[protein] + nitric oxide + H2O = Fe(II)-heme b-[protein] + nitrite + 2 H(+). It catalyses the reaction H2O2 + AH2 = A + 2 H2O. Its function is as follows. Monomeric heme protein which primary function is to store oxygen and facilitate its diffusion within muscle tissues. Reversibly binds oxygen through a pentacoordinated heme iron and enables its timely and efficient release as needed during periods of heightened demand. Depending on the oxidative conditions of tissues and cells, and in addition to its ability to bind oxygen, it also has a nitrite reductase activity whereby it regulates the production of bioactive nitric oxide. Under stress conditions, like hypoxia and anoxia, it also protects cells against reactive oxygen species thanks to its pseudoperoxidase activity. The chain is Myoglobin from Dromaius novaehollandiae (Emu).